The following is an 80-amino-acid chain: Exodeoxyribonuclease 7 small subunit (80 aa).

It belongs to the XseB family. Heterooligomer composed of large and small subunits.

The protein resides in the cytoplasm. It carries out the reaction Exonucleolytic cleavage in either 5'- to 3'- or 3'- to 5'-direction to yield nucleoside 5'-phosphates.. Functionally, bidirectionally degrades single-stranded DNA into large acid-insoluble oligonucleotides, which are then degraded further into small acid-soluble oligonucleotides. The protein is Exodeoxyribonuclease 7 small subunit of Vibrio parahaemolyticus serotype O3:K6 (strain RIMD 2210633).